Reading from the N-terminus, the 765-residue chain is Endothelin-converting enzyme 2 (765 aa).

Residues 1-60 lie on the Cytoplasmic side of the membrane; sequence MSVALQELGGGGNMVEYKRATLRDEDAPETPVEGGASPDAVEAGFRKRTSRLLGLHTQLE. A helical; Signal-anchor for type II membrane protein membrane pass occupies residues 61–81; the sequence is LVLAGVSLLLAALLLGCLVAL. Residues 82–765 lie on the Lumenal side of the membrane; sequence GVQYHRDPSH…MNSGQLCEVW (684 aa). Positions 93–765 constitute a Peptidase M13 domain; the sequence is TCLTEACIRV…MNSGQLCEVW (673 aa). Cystine bridges form between C94–C99, C117–C750, C125–C710, C181–C430, and C639–C762. 7 N-linked (GlcNAc...) asparagine glycosylation sites follow: N161, N165, N206, N266, N311, N378, and N534. H602 contacts Zn(2+). E603 is an active-site residue. Residue H606 coordinates Zn(2+). Residues N627 and N635 are each glycosylated (N-linked (GlcNAc...) asparagine). E662 is a binding site for Zn(2+). The active-site Proton donor is the D666.

The protein belongs to the peptidase M13 family. Zn(2+) serves as cofactor. Isoform ECE2-1 and isoform ECE2-2 are expressed in brain and adrenal gland.

It is found in the golgi apparatus membrane. The protein resides in the cytoplasmic vesicle. Its subcellular location is the secretory vesicle membrane. The enzyme catalyses Hydrolysis of the 21-Trp-|-Val-22 bond in big endothelin to form endothelin 1.. In terms of biological role, converts big endothelin-1 to endothelin-1. Also involved in the processing of various neuroendocrine peptides, including neurotensin, angiotensin I, substance P, proenkephalin-derived peptides, and prodynorphin-derived peptides. May play a role in amyloid-beta processing. This chain is Endothelin-converting enzyme 2, found in Bos taurus (Bovine).